The primary structure comprises 256 residues: Homeobox protein TGIF2LX (256 aa).

The interval Met-1–Ser-45 is disordered. The segment covering Ala-9–Pro-34 has biased composition (basic and acidic residues). Over residues Ala-35–Ser-45 the composition is skewed to polar residues. A DNA-binding region (homeobox; TALE-type) is located at residues Glu-62–Asp-125. Positions Val-136–Glu-224 are disordered. The segment covering Asp-166–Gly-179 has biased composition (polar residues). Residues Val-209–Glu-224 are compositionally biased toward low complexity.

This sequence belongs to the TALE/TGIF homeobox family.

It localises to the nucleus. Its function is as follows. May have a transcription role in testis. In Papio hamadryas (Hamadryas baboon), this protein is Homeobox protein TGIF2LX (TGIF2LX).